Here is a 774-residue protein sequence, read N- to C-terminus: Chondroitin sulfate synthase 2 (774 aa).

The Cytoplasmic portion of the chain corresponds to 1 to 15 (MRASLLLSVLRPAGP). The helical; Signal-anchor for type II membrane protein transmembrane segment at 16–34 (VAVGISLGFTLSLLSVTWV) threads the bilayer. Residues 35-774 (EEPCGPGPPQ…LFEQEQGNST (740 aa)) are Lumenal-facing. Positions 37 to 103 (PCGPGPPQPG…AQPGQATKKA (67 aa)) are disordered. Positions 54–67 (GNTNAARRPNSVQP) are enriched in polar residues. N-linked (GlcNAc...) asparagine glycans are attached at residues asparagine 138 and asparagine 361. Position 616 (aspartate 616) interacts with a divalent metal cation.

The protein belongs to the chondroitin N-acetylgalactosaminyltransferase family. As to quaternary structure, interacts with PRKN. Mn(2+) is required as a cofactor. Co(2+) serves as cofactor. In terms of tissue distribution, isoform 1, isoform 2 and isoform 3 are expressed in brain (at protein level).

The protein localises to the golgi apparatus. It is found in the golgi stack membrane. It localises to the cytoplasm. Its subcellular location is the cytosol. The protein resides in the mitochondrion. The protein localises to the mitochondrion matrix. It carries out the reaction 3-O-(beta-D-GlcA-(1-&gt;3)-beta-D-GalNAc-(1-&gt;4)-beta-D-GlcA-(1-&gt;3)-beta-D-Gal-(1-&gt;3)-beta-D-Gal-(1-&gt;4)-beta-D-Xyl)-L-seryl-[protein] + UDP-N-acetyl-alpha-D-galactosamine = 3-O-(beta-D-GalNAc-(1-&gt;4)-beta-D-GlcA-(1-&gt;3)-beta-D-GalNAc-(1-&gt;4)-beta-D-GlcA-(1-&gt;3)-beta-D-Gal-(1-&gt;3)-beta-D-Gal-(1-&gt;4)-beta-D-Xyl)-L-seryl-[protein] + UDP + H(+). The catalysed reaction is 3-O-{beta-D-GlcA-(1-&gt;3)-[beta-D-GalNAc-(1-&gt;4)-beta-D-GlcA-(1-&gt;3)](n)-beta-D-GalNAc-(1-&gt;4)-beta-D-GlcA-(1-&gt;3)-beta-D-Gal-(1-&gt;3)-beta-D-Gal-(1-&gt;4)-beta-D-Xyl}-L-seryl-[protein] + UDP-N-acetyl-alpha-D-galactosamine = 3-O-{[beta-D-GalNAc-(1-&gt;4)-beta-D-GlcA-(1-&gt;3)](n+1)-beta-D-GalNAc-(1-&gt;4)-beta-D-GlcA-(1-&gt;3)-beta-D-Gal-(1-&gt;3)-beta-D-Gal-(1-&gt;4)-beta-D-Xyl}-L-seryl-[protein] + UDP + H(+). The enzyme catalyses 3-O-(beta-D-GalNAc-(1-&gt;4)-beta-D-GlcA-(1-&gt;3)-beta-D-Gal-(1-&gt;3)-beta-D-Gal-(1-&gt;4)-beta-D-Xyl)-L-seryl-[protein] + UDP-alpha-D-glucuronate = 3-O-(beta-D-GlcA-(1-&gt;3)-beta-D-GalNAc-(1-&gt;4)-beta-D-GlcA-(1-&gt;3)-beta-D-Gal-(1-&gt;3)-beta-D-Gal-(1-&gt;4)-beta-D-Xyl)-L-seryl-[protein] + UDP + H(+). It catalyses the reaction 3-O-{[beta-D-GalNAc-(1-&gt;4)-beta-D-GlcA-(1-&gt;3)](n)-beta-D-GalNAc-(1-&gt;4)-beta-D-GlcA-(1-&gt;3)-beta-D-Gal-(1-&gt;3)-beta-D-Gal-(1-&gt;4)-beta-D-Xyl}-L-seryl-[protein] + UDP-alpha-D-glucuronate = 3-O-{beta-D-GlcA-(1-&gt;3)-[beta-D-GalNAc-(1-&gt;4)-beta-D-GlcA-(1-&gt;3)](n)-beta-D-GalNAc-(1-&gt;4)-beta-D-GlcA-(1-&gt;3)-beta-D-Gal-(1-&gt;3)-beta-D-Gal-(1-&gt;4)-beta-D-Xyl}-L-seryl-[protein] + UDP + H(+). Its function is as follows. Has both beta-1,3-glucuronic acid and beta-1,4-N-acetylgalactosamine transferase activity. Transfers glucuronic acid (GlcUA) from UDP-GlcUA and N-acetylgalactosamine (GalNAc) from UDP-GalNAc to the non-reducing end of the elongating chondroitin polymer. Seems to act as a specific activating factor for CHSY1 in chondroitin polymerization. In terms of biological role, may facilitate PRKN transport into the mitochondria. In collaboration with PRKN, may enhance cell viability and protect cells from oxidative stress. The sequence is that of Chondroitin sulfate synthase 2 from Mus musculus (Mouse).